Consider the following 89-residue polypeptide: Small ribosomal subunit protein uS14A (89 aa).

Belongs to the universal ribosomal protein uS14 family. Part of the 30S ribosomal subunit. Contacts proteins S3 and S10.

Functionally, binds 16S rRNA, required for the assembly of 30S particles and may also be responsible for determining the conformation of the 16S rRNA at the A site. In Bacillus licheniformis (strain ATCC 14580 / DSM 13 / JCM 2505 / CCUG 7422 / NBRC 12200 / NCIMB 9375 / NCTC 10341 / NRRL NRS-1264 / Gibson 46), this protein is Small ribosomal subunit protein uS14A.